An 857-amino-acid polypeptide reads, in one-letter code: DNA mismatch repair protein MutS (857 aa).

Residue 608-615 coordinates ATP; that stretch reads GPNMSGKS.

Belongs to the DNA mismatch repair MutS family.

This protein is involved in the repair of mismatches in DNA. It is possible that it carries out the mismatch recognition step. This protein has a weak ATPase activity. This is DNA mismatch repair protein MutS from Lactobacillus gasseri (strain ATCC 33323 / DSM 20243 / BCRC 14619 / CIP 102991 / JCM 1131 / KCTC 3163 / NCIMB 11718 / NCTC 13722 / AM63).